We begin with the raw amino-acid sequence, 292 residues long: Shikimate dehydrogenase (NADP(+)) (292 aa).

Residues 22-24 and S69 each bind shikimate; that span reads SLS. The active-site Proton acceptor is K73. Shikimate-binding residues include N94 and D111. NADP(+)-binding positions include 135-139 and I236; that span reads GVGGA. Shikimate is bound at residue Y238. NADP(+) is bound at residue G260.

This sequence belongs to the shikimate dehydrogenase family. Homodimer.

The catalysed reaction is shikimate + NADP(+) = 3-dehydroshikimate + NADPH + H(+). It functions in the pathway metabolic intermediate biosynthesis; chorismate biosynthesis; chorismate from D-erythrose 4-phosphate and phosphoenolpyruvate: step 4/7. Functionally, involved in the biosynthesis of the chorismate, which leads to the biosynthesis of aromatic amino acids. Catalyzes the reversible NADPH linked reduction of 3-dehydroshikimate (DHSA) to yield shikimate (SA). The chain is Shikimate dehydrogenase (NADP(+)) from Streptococcus pyogenes serotype M2 (strain MGAS10270).